Reading from the N-terminus, the 174-residue chain is Protein C2-DOMAIN ABA-RELATED 2 (174 aa).

Methionine 1 bears the N-acetylmethionine mark. The region spanning 1–104 is the C2 domain; it reads MENMLGLLRL…EAIRIQNQLG (104 aa). The Ca(2+) site is built by arginine 21, aspartate 22, aspartate 27, aspartate 73, arginine 74, aspartate 75, and aspartate 81.

This sequence belongs to the plant CAR protein family. In terms of assembly, binds to PYR/PYL/RCAR abscisic acid intracellular receptors in an ABA-independent manner, both at the plasma membrane and in the nucleus. Ca(2+) serves as cofactor.

It is found in the cell membrane. It localises to the nucleus. Its function is as follows. Stimulates the GTPase/ATPase activities of Obg-like ATPases. Mediates the transient calcium-dependent interaction of PYR/PYL/RCAR abscisic acid (ABA) receptors with the plasma membrane and thus regulates ABA sensitivity. This Arabidopsis thaliana (Mouse-ear cress) protein is Protein C2-DOMAIN ABA-RELATED 2.